The chain runs to 428 residues: Spliceosome RNA helicase DDX39B (428 aa).

The segment covering 1–19 (MAENDVDNELLDYEDDEVE) has biased composition (acidic residues). Positions 1–31 (MAENDVDNELLDYEDDEVETAAGGDGAEAPA) are disordered. Residue A2 is modified to N-acetylalanine. Residue K36 is modified to N6-acetyllysine; alternate. K36 is covalently cross-linked (Glycyl lysine isopeptide (Lys-Gly) (interchain with G-Cter in SUMO2); alternate). S38 and S41 each carry phosphoserine. Residues 45–73 (SGFRDFLLKPELLRAIVDCGFEHPSEVQH) carry the Q motif motif. One can recognise a Helicase ATP-binding domain in the interval 76 to 249 (IPQAILGMDV…RKFMQDPMEI (174 aa)). An ATP-binding site is contributed by 89 to 96 (AKSGMGKT). T172 is modified (phosphothreonine). The DECD box motif lies at 196 to 199 (DECD). The region spanning 261–422 (GLQQYYVKLK…ELPDEIDISS (162 aa)) is the Helicase C-terminal domain.

This sequence belongs to the DEAD box helicase family. DECD subfamily. As to quaternary structure, homodimer, and heterodimer with DDX39A. DDX39B interacts with the THO subcomplex to form the THO-DDX39B complex which multimerizes into a 28-subunit tetrameric assembly. Component of the transcription/export (TREX) complex at least composed of ALYREF/THOC4, DDX39B, SARNP/CIP29, CHTOP and the THO subcomplex; in the complex interacts with THOC2. THOC1-THOC2-THOC3-DDX39B subcomplex is sufficient for the interaction with export factor NXF1-NXT1. TREX seems to have a dynamic structure involving ATP-dependent remodeling. Within the TREX complex bridges ALYREF/THOC4 and the THO subcomplex, and, in a ATP-dependent manner, ALYREF/THOC4 and SARNP/CIP29. Component of the spliceosome. Interacts directly with U2AF2. Interacts with RBM8A, RNPS1 and SRRM1, FYTTD1/UIF, THOC1, MX1 and POLDIP3. Interacts with LUZP4. Interacts with SARNP/CIP29 (via the C-terminal domain); the interaction is direct and facilitates RNA binding of DDX39B.

The protein resides in the nucleus. It localises to the nucleus speckle. The protein localises to the cytoplasm. It carries out the reaction ATP + H2O = ADP + phosphate + H(+). Involved in nuclear export of spliced and unspliced mRNA. Component of the TREX complex which is thought to couple mRNA transcription, processing and nuclear export, and specifically associates with spliced mRNA and not with unspliced pre-mRNA. The TREX complex is recruited to spliced mRNAs by a transcription-independent mechanism, binds to mRNA upstream of the exon-junction complex (EJC) and is recruited in a splicing- and cap-dependent manner to a region near the 5' end of the mRNA where it functions in mRNA export to the cytoplasm via the TAP/NXF1 pathway. The THOC1-THOC2-THOC3 core complex alone is sufficient to promote ATPase activity of DDX39B; in the complex THOC2 is the only component that directly interacts with DDX39B. Associates with SARNP/CIP29, which facilitates RNA binding of DDX39B and likely plays a role in mRNA export. May undergo several rounds of ATP hydrolysis during assembly of TREX to drive subsequent loading of components such as ALYREF/THOC4 and CHTOP onto mRNA. Also associates with pre-mRNA independent of ALYREF/THOC4. Involved in the nuclear export of intronless mRNA; the ATP-bound form is proposed to recruit export adapter ALYREF/THOC4 to intronless mRNA; its ATPase activity is cooperatively stimulated by RNA and ALYREF/THOC4 and ATP hydrolysis is thought to trigger the dissociation from RNA to allow the association of ALYREF/THOC4 and the NXF1-NXT1 heterodimer. Involved in transcription elongation and genome stability. In terms of biological role, splice factor that is required for the first ATP-dependent step in spliceosome assembly and for the interaction of U2 snRNP with the branchpoint. Has both RNA-stimulated ATP binding/hydrolysis activity and ATP-dependent RNA unwinding activity. Even with the stimulation of RNA, the ATPase activity is weak. Can only hydrolyze ATP but not other NTPs. The RNA stimulation of ATPase activity does not have a strong preference for the sequence and length of the RNA. However, ssRNA stimulates the ATPase activity much more strongly than dsRNA. Can unwind 5' or 3' overhangs or blunt end RNA duplexes in vitro. The ATPase and helicase activities are not influenced by U2AF2; the effect of ALYREF/THOC4 is reported conflictingly. This is Spliceosome RNA helicase DDX39B (DDX39B) from Bos taurus (Bovine).